The sequence spans 71 residues: Potassium voltage-gated channel subfamily E member 2 (71 aa).

Residues 7–27 (VILYLMVMIGMFSFIIVAILV) traverse the membrane as a helical segment. The Cytoplasmic portion of the chain corresponds to 28-71 (STVKSKRREHSNDPYHQYIVEDWQEKYKSQILHFEEAKATIHEN).

This sequence belongs to the potassium channel KCNE family. Interacts with KCNB1. Associates with KCNH2/ERG1. May associate with KCNQ2 and KCNQ3. Associates with HCN1 and probably HCN2. Heteromultimer with KCNC2. Interacts with KCNC2. Interacts with KCNQ1; forms a heterooligomer complex that targets to the membrane raft and leading to currents with an apparently instantaneous activation, a rapid deactivation process and a linear current-voltage relationship and decreases the amplitude of the outward current. Detected in heart; expression is highest in the SA node and the right atrium, and barely detectable in the ventricle.

The protein resides in the cell membrane. It localises to the apical cell membrane. In terms of biological role, ancillary protein that functions as a regulatory subunit of the voltage-gated potassium (Kv) channel complex composed of pore-forming and potassium-conducting alpha subunits and of regulatory beta subunits. KCNE2 beta subunit modulates the gating kinetics and enhances stability of the channel complex. Alters the gating of the delayed rectifier Kv channel containing KCNB1 alpha subunit. Associates with KCNH2/HERG alpha subunit Kv channel to form the rapidly activating component of the delayed rectifying potassium current (IKr) in heart. May associate with KCNQ2 and/or KCNQ3 alpha subunits to modulate the native M-type current. May associate with HCN1 and HCN2 channel subunits to increase potassium current. Forms a heterooligomer complex with KCNQ1/KVLQT1 alpha subunits which leads to currents with an apparently instantaneous activation, a rapid deactivation process and a linear current-voltage relationship and decreases the amplitude of the outward current. KCNQ1-KCNE2 channel associates with Na(+)-coupled myo-inositol symporter in the apical membrane of choroid plexus epithelium and regulates the myo-inositol gradient between blood and cerebrospinal fluid with an impact on neuron excitability. The polypeptide is Potassium voltage-gated channel subfamily E member 2 (KCNE2) (Oryctolagus cuniculus (Rabbit)).